Reading from the N-terminus, the 538-residue chain is AAA ATPase forming ring-shaped complexes (538 aa).

The stretch at 14-54 forms a coiled coil; that stretch reads ARELRLANHRLGAQNEKLTEALKASREKLAEINSRLADMAE. 240 to 245 is a binding site for ATP; sequence GNGKTL.

This sequence belongs to the AAA ATPase family. In terms of assembly, homohexamer. Assembles into a hexameric ring structure.

The polypeptide is AAA ATPase forming ring-shaped complexes (Corynebacterium urealyticum (strain ATCC 43042 / DSM 7109)).